Here is a 204-residue protein sequence, read N- to C-terminus: Ras-related protein Rab-1D (204 aa).

GTP is bound by residues 17–25, 35–42, 65–69, 123–126, and 153–155; these read GDSGVGKSC, WTDTHIST, DTAGQ, NKTD, and SAK. The Effector region motif lies at 39–47; it reads HISTIGVDF. Residues 182–191 show a composition bias toward basic and acidic residues; sequence PKPDEVDIKS. The tract at residues 182–204 is disordered; that stretch reads PKPDEVDIKSKNKTKSGGKKSFC. Basic residues predominate over residues 192–204; that stretch reads KNKTKSGGKKSFC. Cys-204 carries S-geranylgeranyl cysteine lipidation.

It belongs to the small GTPase superfamily. Rab family.

The protein localises to the cell membrane. The sequence is that of Ras-related protein Rab-1D (rab1D) from Dictyostelium discoideum (Social amoeba).